Reading from the N-terminus, the 668-residue chain is Ankyrin repeat domain-containing protein OPG023 (668 aa).

9 ANK repeats span residues 31–64, 101–131, 135–166, 199–231, 235–266, 277–311, 334–368, 458–487, and 491–521; these read FKNN…PLHK, NDFN…DFSV, KHHS…SVIY, YIIS…NPSS, NYCT…NTAY, RGIM…PHGI, NSDV…VVNK, RGET…DVNI, and NGYT…TLDC. The tract at residues 586-666 is PRANC/F-box-like; it reads GNTMFSLIFT…PYTIKYKIFE (81 aa).

This sequence belongs to the orthopoxvirus OPG023 family. As to quaternary structure, interacts (via N-terminus) with host RELA. Interacts (via PRANC/F-box-like domain) with the SKP1 component of the host SCF ubiquitin ligase complex.

Its function is as follows. Substrate-specific adapter of SKP1-containing E3 ubiquitin-protein ligases which mediate the ubiquitination and subsequent proteasomal degradation of host target proteins. Prevents activation and subsequent nuclear localization of NF-kappa-B in infected cells, by targeting NF-kappa-B RELA subunit to the SCF E3 ligase complex. The chain is Ankyrin repeat domain-containing protein OPG023 (OPG023) from Bos taurus (Bovine).